The sequence spans 156 residues: Persephin (156 aa).

The N-terminal stretch at 1–21 (MAVGKFLLGSLLLLSLQLGQG) is a signal peptide. Disulfide bonds link Cys66–Cys124, Cys93–Cys152, and Cys97–Cys154.

Belongs to the TGF-beta family. GDNF subfamily. As to quaternary structure, homodimer; disulfide-linked. Interacts with GFRA4 coreceptor and RET: forms a 2:2:2 ternary complex composed of PSPN ligand, GFRA4 and RET receptor.

The protein localises to the secreted. Functionally, growth factor that exhibits neurotrophic activity on mesencephalic dopaminergic and motor neurons. Acts by binding to its coreceptor, GFRA4, leading to autophosphorylation and activation of the RET receptor. This is Persephin from Homo sapiens (Human).